A 141-amino-acid chain; its full sequence is Nucleoside triphosphatase NudI (141 aa).

One can recognise a Nudix hydrolase domain in the interval 1 to 141 (MRQRTIVCPL…RKTLRLKGLL (141 aa)). The Nudix box motif lies at 38-59 (GGVEPGERIEEALRREIREELG).

It belongs to the Nudix hydrolase family. NudI subfamily. In terms of assembly, monomer. Mg(2+) is required as a cofactor.

It catalyses the reaction a ribonucleoside 5'-triphosphate + H2O = a ribonucleoside 5'-phosphate + diphosphate + H(+). The catalysed reaction is a 2'-deoxyribonucleoside 5'-triphosphate + H2O = a 2'-deoxyribonucleoside 5'-phosphate + diphosphate + H(+). It carries out the reaction dUTP + H2O = dUMP + diphosphate + H(+). The enzyme catalyses dTTP + H2O = dTMP + diphosphate + H(+). It catalyses the reaction dCTP + H2O = dCMP + diphosphate + H(+). Its function is as follows. Catalyzes the hydrolysis of nucleoside triphosphates, with a preference for pyrimidine deoxynucleoside triphosphates (dUTP, dTTP and dCTP). This chain is Nucleoside triphosphatase NudI, found in Escherichia coli O9:H4 (strain HS).